A 302-amino-acid polypeptide reads, in one-letter code: Sulfate adenylyltransferase subunit 2 (302 aa).

It belongs to the PAPS reductase family. CysD subfamily. As to quaternary structure, heterodimer composed of CysD, the smaller subunit, and CysN.

The catalysed reaction is sulfate + ATP + H(+) = adenosine 5'-phosphosulfate + diphosphate. It participates in sulfur metabolism; hydrogen sulfide biosynthesis; sulfite from sulfate: step 1/3. With CysN forms the ATP sulfurylase (ATPS) that catalyzes the adenylation of sulfate producing adenosine 5'-phosphosulfate (APS) and diphosphate, the first enzymatic step in sulfur assimilation pathway. APS synthesis involves the formation of a high-energy phosphoric-sulfuric acid anhydride bond driven by GTP hydrolysis by CysN coupled to ATP hydrolysis by CysD. This chain is Sulfate adenylyltransferase subunit 2, found in Pectobacterium carotovorum subsp. carotovorum (strain PC1).